Reading from the N-terminus, the 260-residue chain is Triosephosphate isomerase (260 aa).

Residue 11–13 coordinates substrate; the sequence is NWK. Histidine 103 (electrophile) is an active-site residue. The active-site Proton acceptor is glutamate 175. Substrate is bound by residues glycine 181, serine 220, and 241 to 242; that span reads GG.

This sequence belongs to the triosephosphate isomerase family. As to quaternary structure, homodimer.

The protein localises to the cytoplasm. It carries out the reaction D-glyceraldehyde 3-phosphate = dihydroxyacetone phosphate. The protein operates within carbohydrate biosynthesis; gluconeogenesis. It participates in carbohydrate degradation; glycolysis; D-glyceraldehyde 3-phosphate from glycerone phosphate: step 1/1. Functionally, involved in the gluconeogenesis. Catalyzes stereospecifically the conversion of dihydroxyacetone phosphate (DHAP) to D-glyceraldehyde-3-phosphate (G3P). In Shewanella sp. (strain W3-18-1), this protein is Triosephosphate isomerase.